The chain runs to 256 residues: uncharacterized protein (256 aa).

The first 22 residues, 1–22, serve as a signal peptide directing secretion; sequence MKSIKRIGLCISLLILSIFVTS. The N-palmitoyl cysteine moiety is linked to residue Cys23. Cys23 is lipidated: S-diacylglycerol cysteine.

The protein belongs to the staphylococcal tandem lipoprotein family.

The protein localises to the cell membrane. This is an uncharacterized protein from Staphylococcus aureus (strain USA300).